Reading from the N-terminus, the 257-residue chain is Acetylglutamate kinase (257 aa).

Substrate-binding positions include 43–44 (GG), Arg65, and Asn157. ATP is bound by residues 180-185 (DVSGIL) and 208-210 (IIT).

This sequence belongs to the acetylglutamate kinase family. ArgB subfamily. In terms of assembly, homodimer.

Its subcellular location is the cytoplasm. It catalyses the reaction N-acetyl-L-glutamate + ATP = N-acetyl-L-glutamyl 5-phosphate + ADP. It participates in amino-acid biosynthesis; L-arginine biosynthesis; N(2)-acetyl-L-ornithine from L-glutamate: step 2/4. Its function is as follows. Catalyzes the ATP-dependent phosphorylation of N-acetyl-L-glutamate. The polypeptide is Acetylglutamate kinase (Salmonella schwarzengrund (strain CVM19633)).